Reading from the N-terminus, the 512-residue chain is NADH-quinone oxidoreductase subunit N (512 aa).

The next 14 helical transmembrane spans lie at 32–52 (VLPA…SVLF), 57–77 (FIIV…AVFY), 97–117 (VLSF…AAIV), 126–146 (IEFP…TLMT), 151–171 (FILV…LIGM), 186–206 (FLLG…LFGG), 231–251 (IGLV…PYHA), 264–284 (VTGY…LILY), 296–316 (WAWL…LLAL), 324–344 (MLAY…SAGI), 348–368 (VLFY…ILAY), 392–412 (AIAI…GGFW), 431–451 (ILLI…LRIG), and 473–493 (VGVT…WFLL).

This sequence belongs to the complex I subunit 2 family. As to quaternary structure, NDH-1 is composed of 14 different subunits. Subunits NuoA, H, J, K, L, M, N constitute the membrane sector of the complex.

It is found in the cell inner membrane. The catalysed reaction is a quinone + NADH + 5 H(+)(in) = a quinol + NAD(+) + 4 H(+)(out). In terms of biological role, NDH-1 shuttles electrons from NADH, via FMN and iron-sulfur (Fe-S) centers, to quinones in the respiratory chain. The immediate electron acceptor for the enzyme in this species is believed to be ubiquinone. Couples the redox reaction to proton translocation (for every two electrons transferred, four hydrogen ions are translocated across the cytoplasmic membrane), and thus conserves the redox energy in a proton gradient. This is NADH-quinone oxidoreductase subunit N from Leptospira interrogans serogroup Icterohaemorrhagiae serovar Lai (strain 56601).